A 249-amino-acid polypeptide reads, in one-letter code: Triosephosphate isomerase (249 aa).

9–11 (NWK) serves as a coordination point for substrate. Histidine 94 acts as the Electrophile in catalysis. The Proton acceptor role is filled by glutamate 166. Residues glycine 172, serine 211, and 232–233 (GG) contribute to the substrate site.

It belongs to the triosephosphate isomerase family. Homodimer.

It localises to the cytoplasm. It catalyses the reaction D-glyceraldehyde 3-phosphate = dihydroxyacetone phosphate. It participates in carbohydrate biosynthesis; gluconeogenesis. Its pathway is carbohydrate degradation; glycolysis; D-glyceraldehyde 3-phosphate from glycerone phosphate: step 1/1. Functionally, involved in the gluconeogenesis. Catalyzes stereospecifically the conversion of dihydroxyacetone phosphate (DHAP) to D-glyceraldehyde-3-phosphate (G3P). In Chromohalobacter salexigens (strain ATCC BAA-138 / DSM 3043 / CIP 106854 / NCIMB 13768 / 1H11), this protein is Triosephosphate isomerase.